Consider the following 517-residue polypeptide: Serine O-succinyltransferase (517 aa).

Residues 1 to 46 (MSPLNGVARSLPRPFQAVARRPFRVAQPAVACPSNRRSFNHSRSLR) constitute a mitochondrion transit peptide. The segment at 34 to 66 (SNRRSFNHSRSLRSTGSQSPAPSPRDSSNPALS) is disordered. Residues 45–64 (LRSTGSQSPAPSPRDSSNPA) are compositionally biased toward polar residues. The AB hydrolase-1 domain occupies 134 to 386 (NVILLHTGLS…LTQQLATKKQ (253 aa)). Positions 141-144 (GLSA) are important for substrate specificity. The active-site Nucleophile is Ser238. Arg307 provides a ligand contact to substrate. Residues 413 to 436 (QPYQEQPSASTSAEQSASASETGS) form a disordered region. Residues 416–436 (QEQPSASTSAEQSASASETGS) show a composition bias toward low complexity. Catalysis depends on residues Asp461 and His498. Asp499 contributes to the substrate binding site.

Belongs to the AB hydrolase superfamily. MetX family.

The protein localises to the mitochondrion. It carries out the reaction succinyl-CoA + L-serine = O-succinyl-L-serine + CoA. The protein operates within amino-acid biosynthesis; L-cysteine biosynthesis; L-cysteine from L-serine: step 1/2. Its function is as follows. Transfers a succinyl group from succinyl-CoA to L-serine, forming succinyl-L-serine. Also has weak serine acetyl transferase activity and homoserine succinyl transferase activity. The polypeptide is Serine O-succinyltransferase (Emericella nidulans (Aspergillus nidulans)).